The sequence spans 697 residues: Elongation factor G 2 (697 aa).

The tr-type G domain occupies 5–280 (SKYRNIGIFA…AVVDYLPAPD (276 aa)). Residues 14–21 (AHVDAGKT), 78–82 (DTPGH), and 132–135 (NKLD) each bind GTP.

This sequence belongs to the TRAFAC class translation factor GTPase superfamily. Classic translation factor GTPase family. EF-G/EF-2 subfamily.

Its subcellular location is the cytoplasm. In terms of biological role, catalyzes the GTP-dependent ribosomal translocation step during translation elongation. During this step, the ribosome changes from the pre-translocational (PRE) to the post-translocational (POST) state as the newly formed A-site-bound peptidyl-tRNA and P-site-bound deacylated tRNA move to the P and E sites, respectively. Catalyzes the coordinated movement of the two tRNA molecules, the mRNA and conformational changes in the ribosome. In Shewanella denitrificans (strain OS217 / ATCC BAA-1090 / DSM 15013), this protein is Elongation factor G 2.